Consider the following 282-residue polypeptide: Pantothenate synthetase (282 aa).

30–37 (MGYLHEGH) contacts ATP. His-37 serves as the catalytic Proton donor. Gln-61 contributes to the (R)-pantoate binding site. Gln-61 serves as a coordination point for beta-alanine. 147–150 (GMKD) contributes to the ATP binding site. Gln-153 is a binding site for (R)-pantoate. ATP contacts are provided by residues Val-176 and 184 to 187 (KSSR).

This sequence belongs to the pantothenate synthetase family. As to quaternary structure, homodimer.

The protein localises to the cytoplasm. It carries out the reaction (R)-pantoate + beta-alanine + ATP = (R)-pantothenate + AMP + diphosphate + H(+). Its pathway is cofactor biosynthesis; (R)-pantothenate biosynthesis; (R)-pantothenate from (R)-pantoate and beta-alanine: step 1/1. Functionally, catalyzes the condensation of pantoate with beta-alanine in an ATP-dependent reaction via a pantoyl-adenylate intermediate. In Geobacillus sp. (strain WCH70), this protein is Pantothenate synthetase.